The following is a 309-amino-acid chain: Protein FdhE (309 aa).

This sequence belongs to the FdhE family.

It is found in the cytoplasm. Functionally, necessary for formate dehydrogenase activity. The sequence is that of Protein FdhE from Salmonella dublin (strain CT_02021853).